Here is a 60-residue protein sequence, read N- to C-terminus: Protein P7 (60 aa).

A helical membrane pass occupies residues 28–48 (FIGVTLIGMFISYYLYALISI).

The protein resides in the host membrane. The sequence is that of Protein P7 from Vitis vinifera (Grape).